The primary structure comprises 223 residues: Phosphoribosylformylglycinamidine synthase subunit PurQ (223 aa).

A Glutamine amidotransferase type-1 domain is found at Lys-2–Gly-223. The active-site Nucleophile is the Cys-86. Active-site residues include His-196 and Glu-198.

In terms of assembly, part of the FGAM synthase complex composed of 1 PurL, 1 PurQ and 2 PurS subunits.

Its subcellular location is the cytoplasm. The catalysed reaction is N(2)-formyl-N(1)-(5-phospho-beta-D-ribosyl)glycinamide + L-glutamine + ATP + H2O = 2-formamido-N(1)-(5-O-phospho-beta-D-ribosyl)acetamidine + L-glutamate + ADP + phosphate + H(+). It carries out the reaction L-glutamine + H2O = L-glutamate + NH4(+). It participates in purine metabolism; IMP biosynthesis via de novo pathway; 5-amino-1-(5-phospho-D-ribosyl)imidazole from N(2)-formyl-N(1)-(5-phospho-D-ribosyl)glycinamide: step 1/2. Functionally, part of the phosphoribosylformylglycinamidine synthase complex involved in the purines biosynthetic pathway. Catalyzes the ATP-dependent conversion of formylglycinamide ribonucleotide (FGAR) and glutamine to yield formylglycinamidine ribonucleotide (FGAM) and glutamate. The FGAM synthase complex is composed of three subunits. PurQ produces an ammonia molecule by converting glutamine to glutamate. PurL transfers the ammonia molecule to FGAR to form FGAM in an ATP-dependent manner. PurS interacts with PurQ and PurL and is thought to assist in the transfer of the ammonia molecule from PurQ to PurL. This is Phosphoribosylformylglycinamidine synthase subunit PurQ from Bartonella henselae (strain ATCC 49882 / DSM 28221 / CCUG 30454 / Houston 1) (Rochalimaea henselae).